Reading from the N-terminus, the 137-residue chain is Large ribosomal subunit protein uL16 (137 aa).

It belongs to the universal ribosomal protein uL16 family. In terms of assembly, part of the 50S ribosomal subunit.

Binds 23S rRNA and is also seen to make contacts with the A and possibly P site tRNAs. This chain is Large ribosomal subunit protein uL16, found in Roseobacter denitrificans (strain ATCC 33942 / OCh 114) (Erythrobacter sp. (strain OCh 114)).